We begin with the raw amino-acid sequence, 473 residues long: H(+)/Cl(-) exchange transporter ClcA (473 aa).

Residues 1–32 (MKTDTPSLEIPQAARLRRRQLIRQLLERDKTP) lie on the Cytoplasmic side of the membrane. Residues 33-69 (LAILFMAAVVGTLVGLAAVAFDKGVSWLQNQRMGALV) traverse the membrane as a helical segment. Topologically, residues 70–76 (HTADNYP) are periplasmic. The chain crosses the membrane as a helical span at residues 77–100 (LLLTVAFLCSAVLAMFGYFLVRKY). The Selectivity filter part_1 motif lies at 106–110 (GSGIP). Chloride is bound at residue Ser-107. The helical intramembrane region spans 109–116 (IPEIEGAL). Over 117–123 (EDQRPVR) the chain is Cytoplasmic. 2 helical membrane-spanning segments follow: residues 124–141 (WWRVLPVKFFGGLGTLGG) and 148–166 (EGPTVQIGGNIGRMVLDIF). The short motif at 146–150 (GREGP) is the Selectivity filter part_2 element. At 167–176 (RLKGDEARHT) the chain is on the cytoplasmic side. 2 intramembrane regions (helical) span residues 177 to 189 (LLATGAAAGLAAA) and 193 to 201 (PLAGILFII). Residues 202-214 (EEMRPQFRYTLIS) lie on the Cytoplasmic side of the membrane. A helical membrane pass occupies residues 215 to 232 (IKAVFIGVIMSTIMYRIF). Over 233 to 252 (NHEVALIDVGKLSDAPLNTL) the chain is Periplasmic. Residues 253 to 281 (WLYLILGIIFGIFGPIFNKWVLGMQDLLH) traverse the membrane as a helical segment. The Cytoplasmic portion of the chain corresponds to 282-287 (RVHGGN). A helical transmembrane segment spans residues 288 to 309 (ITKWVIMGGAIGGLCGLLGFVA). At 310–329 (PATSGGGFNLIPIATAGNFS) the chain is on the periplasmic side. The next 2 helical transmembrane spans lie at 330–349 (MGMLVFIFVARVITTLLCFS) and 355–376 (GIFAPMLALGTVLGTAFGMVAV). Residues 355-359 (GIFAP) carry the Selectivity filter part_3 motif. Positions 356 and 357 each coordinate chloride. Residues 377 to 386 (ELFPQYHLEA) lie on the Periplasmic side of the membrane. Positions 387–401 (GTFAIAGMGALLAAS) form an intramembrane region, helical. Positions 402 to 404 (IRA) form an intramembrane region, note=Loop between two helices. An intramembrane region (helical) is located at residues 405–416 (PLTGIILVLEMT). Residues 417–421 (DNYQL) constitute an intramembrane region (note=Loop between two helices). A helical transmembrane segment spans residues 422–438 (ILPMIITGLGATLLAQF). Over 439–473 (TGGKPLYSAILARTLAKQEAEQLARSKAASASENT) the chain is Cytoplasmic. Tyr-445 is a chloride binding site.

Belongs to the chloride channel (TC 2.A.49) family. ClcA subfamily. As to quaternary structure, homodimer.

Its subcellular location is the cell inner membrane. It catalyses the reaction 2 chloride(in) + H(+)(out) = 2 chloride(out) + H(+)(in). Functionally, proton-coupled chloride transporter. Functions as antiport system and exchanges two chloride ions for 1 proton. Probably acts as an electrical shunt for an outwardly-directed proton pump that is linked to amino acid decarboxylation, as part of the extreme acid resistance (XAR) response. In Escherichia fergusonii (strain ATCC 35469 / DSM 13698 / CCUG 18766 / IAM 14443 / JCM 21226 / LMG 7866 / NBRC 102419 / NCTC 12128 / CDC 0568-73), this protein is H(+)/Cl(-) exchange transporter ClcA.